Consider the following 425-residue polypeptide: Enolase (425 aa).

Q163 provides a ligand contact to (2R)-2-phosphoglycerate. The Proton donor role is filled by E205. The Mg(2+) site is built by D242, E285, and D312. The (2R)-2-phosphoglycerate site is built by K337, R366, S367, and K388. The active-site Proton acceptor is the K337.

Belongs to the enolase family. Mg(2+) serves as cofactor.

It localises to the cytoplasm. It is found in the secreted. The protein resides in the cell surface. The enzyme catalyses (2R)-2-phosphoglycerate = phosphoenolpyruvate + H2O. Its pathway is carbohydrate degradation; glycolysis; pyruvate from D-glyceraldehyde 3-phosphate: step 4/5. Its function is as follows. Catalyzes the reversible conversion of 2-phosphoglycerate (2-PG) into phosphoenolpyruvate (PEP). It is essential for the degradation of carbohydrates via glycolysis. The sequence is that of Enolase from Cereibacter sphaeroides (strain ATCC 17025 / ATH 2.4.3) (Rhodobacter sphaeroides).